The chain runs to 623 residues: Endoglucanase 7 (623 aa).

Residues 1-79 are Cytoplasmic-facing; that stretch reads MHPGNVWGGS…LGCVSVSRTV (79 aa). Residues 80 to 100 traverse the membrane as a helical; Signal-anchor for type II membrane protein segment; that stretch reads FLWTVGSIAVLFLVVALPIII. Over 101–623 the chain is Extracellular; that stretch reads VKSLPRHKSA…TPPPPKAWKP (523 aa). 7 N-linked (GlcNAc...) asparagine glycosylation sites follow: Asn116, Asn221, Asn328, Asn349, Asn412, Asn429, and Asn464. His517 is a catalytic residue. Asn548 carries N-linked (GlcNAc...) asparagine glycosylation. Asp565 is an active-site residue. Asn571 carries an N-linked (GlcNAc...) asparagine glycan. Residue Glu574 is part of the active site.

The protein belongs to the glycosyl hydrolase 9 (cellulase E) family. In terms of tissue distribution, expressed in basal region of leaf blade and proximal parts of leaf and floral organ.

Its subcellular location is the membrane. The enzyme catalyses Endohydrolysis of (1-&gt;4)-beta-D-glucosidic linkages in cellulose, lichenin and cereal beta-D-glucans.. The polypeptide is Endoglucanase 7 (KOR2) (Arabidopsis thaliana (Mouse-ear cress)).